The sequence spans 125 residues: Holo-[acyl-carrier-protein] synthase (125 aa).

Residues D8 and E57 each contribute to the Mg(2+) site.

Belongs to the P-Pant transferase superfamily. AcpS family. Mg(2+) is required as a cofactor.

The protein resides in the cytoplasm. The enzyme catalyses apo-[ACP] + CoA = holo-[ACP] + adenosine 3',5'-bisphosphate + H(+). In terms of biological role, transfers the 4'-phosphopantetheine moiety from coenzyme A to a Ser of acyl-carrier-protein. This is Holo-[acyl-carrier-protein] synthase from Nitrosospira multiformis (strain ATCC 25196 / NCIMB 11849 / C 71).